We begin with the raw amino-acid sequence, 340 residues long: Probable allantoicase (340 aa).

This sequence belongs to the allantoicase family.

The enzyme catalyses allantoate + H2O = (S)-ureidoglycolate + urea. The protein operates within nitrogen metabolism; (S)-allantoin degradation; (S)-ureidoglycolate from allantoate (aminidohydrolase route): step 1/1. The polypeptide is Probable allantoicase (Rhizobium meliloti (strain 1021) (Ensifer meliloti)).